We begin with the raw amino-acid sequence, 122 residues long: Large ribosomal subunit protein uL14 (122 aa).

Belongs to the universal ribosomal protein uL14 family. In terms of assembly, part of the 50S ribosomal subunit. Forms a cluster with proteins L3 and L19. In the 70S ribosome, L14 and L19 interact and together make contacts with the 16S rRNA in bridges B5 and B8.

Functionally, binds to 23S rRNA. Forms part of two intersubunit bridges in the 70S ribosome. This Micrococcus luteus (strain ATCC 4698 / DSM 20030 / JCM 1464 / CCM 169 / CCUG 5858 / IAM 1056 / NBRC 3333 / NCIMB 9278 / NCTC 2665 / VKM Ac-2230) (Micrococcus lysodeikticus) protein is Large ribosomal subunit protein uL14.